The chain runs to 359 residues: Protein mab-21-like 2 (359 aa).

Belongs to the mab-21 family.

It localises to the nucleus. The protein localises to the cytoplasm. In terms of biological role, required for several aspects of embryonic development including normal development of the eye. In Homo sapiens (Human), this protein is Protein mab-21-like 2 (MAB21L2).